Here is a 259-residue protein sequence, read N- to C-terminus: Global transcriptional regulator CodY (259 aa).

Positions 1-155 (MELLAKTRKL…SSTVVGMEIL (155 aa)) are GAF domain. Residues 203–222 (ASKIADRVGITRSVIVNALR) constitute a DNA-binding region (H-T-H motif). Phosphoserine is present on Ser215.

The protein belongs to the CodY family.

The protein localises to the cytoplasm. Functionally, DNA-binding global transcriptional regulator which is involved in the adaptive response to starvation and acts by directly or indirectly controlling the expression of numerous genes in response to nutrient availability. During rapid exponential growth, CodY is highly active and represses genes whose products allow adaptation to nutrient depletion. The protein is Global transcriptional regulator CodY of Bacillus cereus (strain B4264).